A 258-amino-acid polypeptide reads, in one-letter code: Small ribosomal subunit protein mS40 (258 aa).

The N-terminal 35 residues, methionine 1–lysine 35, are a transit peptide targeting the mitochondrion. Serine 49 is modified (phosphoserine). Positions arginine 223–leucine 258 are disordered.

The protein belongs to the bacterial ribosomal protein bS18 family. Mitochondrion-specific ribosomal protein mS40 subfamily. As to quaternary structure, component of the mitochondrial ribosome small subunit (28S) which comprises a 12S rRNA and about 30 distinct proteins.

The protein resides in the mitochondrion. The protein is Small ribosomal subunit protein mS40 (MRPS18B) of Sus scrofa (Pig).